The following is a 318-amino-acid chain: Small ribosomal subunit biogenesis GTPase RsgA (318 aa).

The CP-type G domain occupies 82 to 246 (RQDEIRTKSF…LIDSPGFQEF (165 aa)). GTP contacts are provided by residues 132 to 135 (NKSD) and 186 to 194 (GPSGAGKST). Positions 270, 275, 277, and 283 each coordinate Zn(2+).

It belongs to the TRAFAC class YlqF/YawG GTPase family. RsgA subfamily. In terms of assembly, monomer. Associates with 30S ribosomal subunit, binds 16S rRNA. The cofactor is Zn(2+).

The protein resides in the cytoplasm. Functionally, one of several proteins that assist in the late maturation steps of the functional core of the 30S ribosomal subunit. Helps release RbfA from mature subunits. May play a role in the assembly of ribosomal proteins into the subunit. Circularly permuted GTPase that catalyzes slow GTP hydrolysis, GTPase activity is stimulated by the 30S ribosomal subunit. The polypeptide is Small ribosomal subunit biogenesis GTPase RsgA (Variovorax paradoxus (strain S110)).